The chain runs to 159 residues: Ribonuclease H (159 aa).

The RNase H type-1 domain occupies Met1–Arg145. Mg(2+)-binding residues include Asp10, Glu49, Asp74, and Asp137.

This sequence belongs to the RNase H family. In terms of assembly, monomer. Mg(2+) serves as cofactor.

It localises to the cytoplasm. The enzyme catalyses Endonucleolytic cleavage to 5'-phosphomonoester.. Functionally, endonuclease that specifically degrades the RNA of RNA-DNA hybrids. The polypeptide is Ribonuclease H (Thermosynechococcus vestitus (strain NIES-2133 / IAM M-273 / BP-1)).